Consider the following 457-residue polypeptide: Bifunctional protein GlmU (457 aa).

Residues 1 to 230 form a pyrophosphorylase region; that stretch reads MSKRYAVVLA…FEESLGVNDR (230 aa). Residues 9–12, Lys23, Gln73, and 78–79 each bind UDP-N-acetyl-alpha-D-glucosamine; these read LAAG and GT. Residue Asp103 coordinates Mg(2+). UDP-N-acetyl-alpha-D-glucosamine-binding residues include Gly140, Glu155, Asn170, and Asn228. Asn228 provides a ligand contact to Mg(2+). Residues 231–251 are linker; sequence IALAEASKLMQRRINENHMRN. An N-acetyltransferase region spans residues 252-457; that stretch reads GVTLVNPEST…GYAKHLNHGK (206 aa). 2 residues coordinate UDP-N-acetyl-alpha-D-glucosamine: Arg333 and Lys351. His363 serves as the catalytic Proton acceptor. Residues Tyr366 and Asn377 each coordinate UDP-N-acetyl-alpha-D-glucosamine. Acetyl-CoA-binding positions include 386–387, Ala423, and Arg440; that span reads NY.

This sequence in the N-terminal section; belongs to the N-acetylglucosamine-1-phosphate uridyltransferase family. It in the C-terminal section; belongs to the transferase hexapeptide repeat family. As to quaternary structure, homotrimer. Mg(2+) serves as cofactor.

The protein resides in the cytoplasm. The enzyme catalyses alpha-D-glucosamine 1-phosphate + acetyl-CoA = N-acetyl-alpha-D-glucosamine 1-phosphate + CoA + H(+). It carries out the reaction N-acetyl-alpha-D-glucosamine 1-phosphate + UTP + H(+) = UDP-N-acetyl-alpha-D-glucosamine + diphosphate. The protein operates within nucleotide-sugar biosynthesis; UDP-N-acetyl-alpha-D-glucosamine biosynthesis; N-acetyl-alpha-D-glucosamine 1-phosphate from alpha-D-glucosamine 6-phosphate (route II): step 2/2. It participates in nucleotide-sugar biosynthesis; UDP-N-acetyl-alpha-D-glucosamine biosynthesis; UDP-N-acetyl-alpha-D-glucosamine from N-acetyl-alpha-D-glucosamine 1-phosphate: step 1/1. It functions in the pathway bacterial outer membrane biogenesis; LPS lipid A biosynthesis. Its function is as follows. Catalyzes the last two sequential reactions in the de novo biosynthetic pathway for UDP-N-acetylglucosamine (UDP-GlcNAc). The C-terminal domain catalyzes the transfer of acetyl group from acetyl coenzyme A to glucosamine-1-phosphate (GlcN-1-P) to produce N-acetylglucosamine-1-phosphate (GlcNAc-1-P), which is converted into UDP-GlcNAc by the transfer of uridine 5-monophosphate (from uridine 5-triphosphate), a reaction catalyzed by the N-terminal domain. This is Bifunctional protein GlmU from Listeria monocytogenes serotype 4a (strain HCC23).